The following is a 176-amino-acid chain: Natural cytotoxicity triggering receptor 3 (176 aa).

The signal sequence occupies residues 1-18 (MAWMLLLILIMVYPGSCA). Positions 19–126 (LWVSQPPEIR…VGTGNGTRLV (108 aa)) constitute an Ig-like domain. The Extracellular portion of the chain corresponds to 19 to 135 (LWVSQPPEIR…VVEKEYPQLG (117 aa)). A disulfide bond links C39 and C108. N-linked (GlcNAc...) asparagine glycans are attached at residues N42 and N121. A helical transmembrane segment spans residues 136 to 156 (AGTVLLLRAGFYAVSFLSVAV). Residues 157–176 (GSTLYYQGKCHCHMGTHCHS) are Cytoplasmic-facing.

It belongs to the natural cytotoxicity receptor (NCR) family. As to quaternary structure, homodimer in the unliganted form. Interacts with CD3Z. Interacts with and is activated by binding to NCR3LG1. Interacts with and is activated by binding to BAG6. Interacts with and is inhibited by binding to LGALS3.

The protein resides in the cell membrane. Functionally, cell membrane receptor of natural killer/NK cells that is activated by binding of extracellular ligands including BAG6 and NCR3LG1. Stimulates NK cells cytotoxicity toward neighboring cells producing these ligands. It controls, for instance, NK cells cytotoxicity against tumor cells. Engagement of NCR3 by BAG6 also promotes myeloid dendritic cells (DC) maturation, both through killing DCs that did not acquire a mature phenotype, and inducing the release by NK cells of TNFA and IFNG that promote DC maturation. The sequence is that of Natural cytotoxicity triggering receptor 3 (NCR3) from Macaca fascicularis (Crab-eating macaque).